A 433-amino-acid polypeptide reads, in one-letter code: UDP-N-acetylglucosamine 1-carboxyvinyltransferase 1 (433 aa).

Position 22–23 (22–23) interacts with phosphoenolpyruvate; sequence KN. Arg95 is a binding site for UDP-N-acetyl-alpha-D-glucosamine. Cys119 (proton donor) is an active-site residue. Residue Cys119 is modified to 2-(S-cysteinyl)pyruvic acid O-phosphothioketal. UDP-N-acetyl-alpha-D-glucosamine contacts are provided by residues 124–128, Asp307, and Val329; that span reads RPVDL.

The protein belongs to the EPSP synthase family. MurA subfamily.

It is found in the cytoplasm. It catalyses the reaction phosphoenolpyruvate + UDP-N-acetyl-alpha-D-glucosamine = UDP-N-acetyl-3-O-(1-carboxyvinyl)-alpha-D-glucosamine + phosphate. It participates in cell wall biogenesis; peptidoglycan biosynthesis. In terms of biological role, cell wall formation. Adds enolpyruvyl to UDP-N-acetylglucosamine. This Latilactobacillus sakei subsp. sakei (strain 23K) (Lactobacillus sakei subsp. sakei) protein is UDP-N-acetylglucosamine 1-carboxyvinyltransferase 1.